A 156-amino-acid chain; its full sequence is Small ribosomal subunit protein uS7c (156 aa).

It belongs to the universal ribosomal protein uS7 family. As to quaternary structure, part of the 30S ribosomal subunit.

Its subcellular location is the plastid. The protein localises to the chloroplast. One of the primary rRNA binding proteins, it binds directly to 16S rRNA where it nucleates assembly of the head domain of the 30S subunit. The polypeptide is Small ribosomal subunit protein uS7c (rps7) (Cyanidium caldarium (Red alga)).